The chain runs to 234 residues: R-spondin-4 (234 aa).

The first 19 residues, 1–19 (MRAPLCLLLLVAHAVDMLA), serve as a signal peptide directing secretion. N34 is a glycosylation site (N-linked (GlcNAc...) asparagine). Cystine bridges form between C35/C41, C38/C47, C50/C69, C73/C88, C91/C98, C95/C104, C107/C118, C122/C135, C139/C181, C150/C157, and C190/C196. The FU repeat unit spans residues 85 to 128 (VNRCKKCGATCESCFSQDFCIRCKRQFYLYKGKCLPTCPPGTLA). A TSP type-1 domain is found at 138 to 197 (ECELGPWGGWSPCTHNGKTCGSAWGLESRVREAGRAGHEEAATCQVLSESRKCPIQRPCP). Residues 190–234 (CPIQRPCPGERSPGQKKGRKDRRPRKDRKLDRRLDVRPRQPGLQP) are disordered. The span at 203-216 (GQKKGRKDRRPRKD) shows a compositional bias: basic residues. A compositionally biased stretch (basic and acidic residues) spans 217–227 (RKLDRRLDVRP).

The protein belongs to the R-spondin family. As to quaternary structure, binds heparin. Interacts with LGR4, LGR5 and LGR6. Post-translationally, tyr-112 may be phosphorylated; however as this position is probably extracellular, the vivo relevance is not proven.

Its subcellular location is the secreted. Its function is as follows. Activator of the canonical Wnt signaling pathway by acting as a ligand for LGR4-6 receptors. Upon binding to LGR4-6 (LGR4, LGR5 or LGR6), LGR4-6 associate with phosphorylated LRP6 and frizzled receptors that are activated by extracellular Wnt receptors, triggering the canonical Wnt signaling pathway to increase expression of target genes. Also regulates the canonical Wnt/beta-catenin-dependent pathway and non-canonical Wnt signaling by acting as an inhibitor of ZNRF3, an important regulator of the Wnt signaling pathway. In Homo sapiens (Human), this protein is R-spondin-4 (RSPO4).